We begin with the raw amino-acid sequence, 130 residues long: uncharacterized protein (130 aa).

Positions M1–A20 are cleaved as a signal peptide.

This is an uncharacterized protein from Saccharomyces cerevisiae (strain ATCC 204508 / S288c) (Baker's yeast).